Here is a 613-residue protein sequence, read N- to C-terminus: Carotenoid dioxygenase (613 aa).

The segment at M1–D25 is disordered. Residues H261, H313, H383, and H595 each coordinate Fe(2+).

It belongs to the carotenoid oxygenase family. The cofactor is Fe(2+).

The protein resides in the cytoplasm. It is found in the cytosol. It carries out the reaction torulene + O2 = 4'-apo-beta-carotenal + 3-methyl-2-butenal. It functions in the pathway carotenoid biosynthesis. Torulene dioxygenase; part of pathway that mediates the biosynthesis of neurosporaxanthin, a carboxylic apocarotenoid acting as an essential protective pigments and leading to orange pigmentation. Cao-2 mediates the cleavage of torulene into beta-apo-4'-carotenal, the aldehyde corresponding to the acidic neurosporaxanthin. Is not able to use gamma-carotene (that it is not desaturated at the C4'-C5' bond) as substrate, which suggests a high specificity of cao-2 in cleaving the C4'-C5' double bond. Neurosporaxanthin is synthesized from geranyl-geranyl pyrophosphate (GGPP) through several enzymatic activities. Phytoene synthase activity performed by the bifunctional enzyme al-2 first produces phytoene from geranyl-geranyl pyrophosphate (GGPP). The phytoene dehydrogenase al-1 then introduces 5 desaturations to lead to 3,4-didehydrolycopene via the intermediates phytofluene, zeta-carotene, neurosporene and lycopene. Al-2 cyclase activity then converts 3,4-didehydrolycopene into torulene. Al-2 can also convet lycopene into gamma-carotene which in turn is converted to beta-carotene by an additional al-2 cyclization reaction. Torulene is the substrate of the dioxidase cao-2 that breaks the molecule, removing five carbon atoms to yield beta-apo-4'-carotenal, whereas the aldehyde dehydrogenase ylo-1 mediates the last step by converting beta-apo-4'-carotenal into neurosporaxanthin. The chain is Carotenoid dioxygenase from Neurospora crassa (strain ATCC 24698 / 74-OR23-1A / CBS 708.71 / DSM 1257 / FGSC 987).